The primary structure comprises 147 residues: Deoxyuridine 5'-triphosphate nucleotidohydrolase (147 aa).

Residue arginine 24 participates in Mg(2+) binding. Residues 68–70 (PRS), 82–85 (GVID), tyrosine 88, glycine 93, isoleucine 95, and arginine 111 each bind dUTP.

The protein belongs to the dUTPase family. Requires Mg(2+) as cofactor.

The enzyme catalyses dUTP + H2O = dUMP + diphosphate + H(+). Functionally, this enzyme is involved in nucleotide metabolism: it produces dUMP, the immediate precursor of thymidine nucleotides and it decreases the intracellular concentration of dUTP so that uracil cannot be incorporated into DNA. The chain is Deoxyuridine 5'-triphosphate nucleotidohydrolase (OPG046) from Oryctolagus cuniculus (Rabbit).